The chain runs to 285 residues: N(G),N(G)-dimethylarginine dimethylaminohydrolase 1 (285 aa).

Alanine 2 bears the N-acetylalanine mark. Substrate contacts are provided by residues leucine 30, aspartate 73, 78-79, arginine 98, and arginine 145; that span reads ED. Histidine 173 acts as the Proton donor in catalysis. An S-nitrosocysteine modification is found at cysteine 222. Valine 268 lines the substrate pocket. Cysteine 274 bears the S-nitrosocysteine mark. The active-site Nucleophile is the cysteine 274. A Zn(2+)-binding site is contributed by cysteine 274.

Belongs to the DDAH family. Monomer. As to expression, detected in brain, liver, kidney and pancreas, and at low levels in skeletal muscle.

It catalyses the reaction N(omega),N(omega)-dimethyl-L-arginine + H2O = dimethylamine + L-citrulline. The catalysed reaction is N(omega)-methyl-L-arginine + H2O = L-citrulline + methylamine. Its activity is regulated as follows. Inhibited by zinc ions. Enzyme purified in the absence of 1,10-phenanthroline contains on average 0.4 zinc atoms per subunit. Inhibited by 4-hydroxy-nonenal through the formation of a covalent adduct with His-173. Competitively inhibited by N(5)-iminopropyl-ornithine. Functionally, hydrolyzes N(G),N(G)-dimethyl-L-arginine (ADMA) and N(G)-monomethyl-L-arginine (MMA) which act as inhibitors of NOS. Has therefore a role in the regulation of nitric oxide generation. The protein is N(G),N(G)-dimethylarginine dimethylaminohydrolase 1 of Homo sapiens (Human).